The sequence spans 590 residues: Negative elongation factor D (590 aa).

The tract at residues 15 to 43 (FGSAAEWGDEADGGQQEDDYGEGEDDAEV) is disordered. Positions 21–43 (WGDEADGGQQEDDYGEGEDDAEV) are enriched in acidic residues.

The protein belongs to the NELF-D family. As to quaternary structure, the NELF complex is composed of NELFA, NELFB, NELFCD and NELFE; NELFA and NELFCD form a stable subcomplex that binds primarily through NELFCD to the N-terminus of NELFB. Binds RNA which may help to stabilize the NELF complex on nucleic acid. In vitro, the NELFA:NELFCD subcomplex binds to ssDNA and ssRNA in a sequence- and structure-dependent manner. Interacts with ARAF1. Interacts with PCF11. Interacts with NELFB. Interacts with KAT8.

Its subcellular location is the nucleus. In terms of biological role, essential component of the NELF complex, a complex that negatively regulates the elongation of transcription by RNA polymerase II. The NELF complex, which acts via an association with the DSIF complex and causes transcriptional pausing, is counteracted by the P-TEFb kinase complex. The chain is Negative elongation factor D (NELFCD) from Sus scrofa (Pig).